The sequence spans 115 residues: UPF0738 protein SAB0871 (115 aa).

This sequence belongs to the UPF0738 family.

The sequence is that of UPF0738 protein SAB0871 from Staphylococcus aureus (strain bovine RF122 / ET3-1).